The sequence spans 308 residues: Protoheme IX farnesyltransferase (308 aa).

9 helical membrane passes run 20-40 (VLAY…VTAI), 53-73 (PLLI…ANTF), 102-122 (NALV…WWTT), 124-144 (LLSG…YTLL), 149-169 (TSQN…IGWS), 170-190 (AITD…FFWT), 227-249 (LIYT…WLYM), 254-276 (VAGA…GEPV), and 288-308 (YLAV…PTLF).

It belongs to the UbiA prenyltransferase family. Protoheme IX farnesyltransferase subfamily.

The protein resides in the cell membrane. The enzyme catalyses heme b + (2E,6E)-farnesyl diphosphate + H2O = Fe(II)-heme o + diphosphate. It participates in porphyrin-containing compound metabolism; heme O biosynthesis; heme O from protoheme: step 1/1. In terms of biological role, converts heme B (protoheme IX) to heme O by substitution of the vinyl group on carbon 2 of heme B porphyrin ring with a hydroxyethyl farnesyl side group. The protein is Protoheme IX farnesyltransferase of Mycobacterium leprae (strain TN).